Here is a 615-residue protein sequence, read N- to C-terminus: Ectoine/glycine betaine/proline transporter EctP (615 aa).

Helical transmembrane passes span 24–44 (FIFS…IALG), 62–82 (LGWM…GIFA), 102–122 (IVWF…FWGV), 156–176 (FGIH…YFIY), 207–227 (LAIV…VLQI), 240–260 (VSWV…ISVA), 275–295 (IAMA…LTLL), 329–349 (WTVF…MFVA), 360–380 (FIGG…SIFG), 417–437 (LTGI…ITSI), 463–483 (WACT…SSGI), and 489–509 (VVII…FSLL). 2 disordered regions span residues 524 to 562 (TRQW…LEHD) and 589 to 615 (PEEA…EYDI). 2 stretches are compositionally biased toward basic and acidic residues: residues 526 to 540 (QWEK…EEHS) and 600 to 615 (KIVE…EYDI).

This sequence belongs to the BCCT transporter (TC 2.A.15) family.

It is found in the cell membrane. In terms of biological role, involved in the uptake of osmoprotectants. Can transport ectoine, proline and glycine betaine. Na(+) is probably the coupling ion. The chain is Ectoine/glycine betaine/proline transporter EctP from Corynebacterium glutamicum (strain ATCC 13032 / DSM 20300 / JCM 1318 / BCRC 11384 / CCUG 27702 / LMG 3730 / NBRC 12168 / NCIMB 10025 / NRRL B-2784 / 534).